The following is a 212-amino-acid chain: Abscisic acid receptor PYL10 (212 aa).

The interval 34–191 (YAVGPGQCSS…NLQKLKSVSE (158 aa)) is START-like. Residues K70, 107–112 (ASTSTE), 134–140 (RLRNYRS), and E156 each bind abscisate. The Gate loop motif lies at 103–107 (SGLPA). Residues 133 to 135 (HRL) carry the Latch loop motif.

It belongs to the PYR/PYL/RCAR abscisic acid intracellular receptor family. As to quaternary structure, homodimer. Interacts with PP2C53. Binding to PP2C53 is dependent on the presence of abscisic acid (ABA). Interacts with PP2C50. Binding to PP2C50 is dependent on the presence of ABA.

The protein resides in the cytoplasm. The protein localises to the cytosol. Its subcellular location is the nucleus. In terms of biological role, inhibits the protein phosphatases PP2C06 and PP2C09 when activated by abscisic acid (ABA). Together with PP2C53, SAPK8 and SAPK10, may form an ABA signaling module involved in stress response. The protein is Abscisic acid receptor PYL10 of Oryza sativa subsp. japonica (Rice).